A 1165-amino-acid chain; its full sequence is Pesticidal crystal protein Cry1Da (1165 aa).

This sequence belongs to the delta endotoxin family.

Functionally, promotes colloidosmotic lysis by binding to the midgut epithelial cells of many lepidopteran larvae. The sequence is that of Pesticidal crystal protein Cry1Da (cry1Da) from Bacillus thuringiensis subsp. aizawai.